The chain runs to 285 residues: Ribosomal RNA small subunit methyltransferase A (285 aa).

Asn29, Leu31, Gly56, Glu77, Asp102, and Asn123 together coordinate S-adenosyl-L-methionine.

This sequence belongs to the class I-like SAM-binding methyltransferase superfamily. rRNA adenine N(6)-methyltransferase family. RsmA subfamily.

Its subcellular location is the cytoplasm. It catalyses the reaction adenosine(1518)/adenosine(1519) in 16S rRNA + 4 S-adenosyl-L-methionine = N(6)-dimethyladenosine(1518)/N(6)-dimethyladenosine(1519) in 16S rRNA + 4 S-adenosyl-L-homocysteine + 4 H(+). In terms of biological role, specifically dimethylates two adjacent adenosines (A1518 and A1519) in the loop of a conserved hairpin near the 3'-end of 16S rRNA in the 30S particle. May play a critical role in biogenesis of 30S subunits. This Clostridium perfringens (strain ATCC 13124 / DSM 756 / JCM 1290 / NCIMB 6125 / NCTC 8237 / Type A) protein is Ribosomal RNA small subunit methyltransferase A.